Reading from the N-terminus, the 473-residue chain is Sulfate adenylyltransferase subunit 1 (473 aa).

The tr-type G domain occupies 19-238 (KTLLKFLTCG…IKIKNSISSE (220 aa)). Positions 28–35 (GSVDDGKS) are G1. 28-35 (GSVDDGKS) contributes to the GTP binding site. The G2 stretch occupies residues 86–90 (GITID). The interval 107–110 (DTPG) is G3. Residues 107 to 111 (DTPGH) and 162 to 165 (NKMD) each bind GTP. Residues 162 to 165 (NKMD) form a G4 region. A G5 region spans residues 200–202 (SAL).

Belongs to the TRAFAC class translation factor GTPase superfamily. Classic translation factor GTPase family. CysN/NodQ subfamily. As to quaternary structure, heterodimer composed of CysD, the smaller subunit, and CysN.

The catalysed reaction is sulfate + ATP + H(+) = adenosine 5'-phosphosulfate + diphosphate. It participates in sulfur metabolism; hydrogen sulfide biosynthesis; sulfite from sulfate: step 1/3. Its function is as follows. With CysD forms the ATP sulfurylase (ATPS) that catalyzes the adenylation of sulfate producing adenosine 5'-phosphosulfate (APS) and diphosphate, the first enzymatic step in sulfur assimilation pathway. APS synthesis involves the formation of a high-energy phosphoric-sulfuric acid anhydride bond driven by GTP hydrolysis by CysN coupled to ATP hydrolysis by CysD. This Buchnera aphidicola subsp. Acyrthosiphon pisum (strain 5A) protein is Sulfate adenylyltransferase subunit 1.